A 95-amino-acid chain; its full sequence is Small ribosomal subunit protein uS19 (95 aa).

Belongs to the universal ribosomal protein uS19 family.

Its function is as follows. Protein S19 forms a complex with S13 that binds strongly to the 16S ribosomal RNA. This is Small ribosomal subunit protein uS19 (rpsS) from Treponema pallidum (strain Nichols).